Reading from the N-terminus, the 199-residue chain is Gamma-glutamylcyclotransferase 2-3 (199 aa).

Residue 5-10 coordinates substrate; sequence VFGYGS. Glu-86 (proton acceptor) is an active-site residue.

It belongs to the gamma-glutamylcyclotransferase family. Requires Mn(2+) as cofactor.

It localises to the cytoplasm. The enzyme catalyses glutathione = L-cysteinylglycine + 5-oxo-L-proline. Its function is as follows. Converts GSH to 5-oxoproline and cysteine-glycine (Cys-Gly) dipeptide in vitro and plays a significant role in glutathione (GSH) homeostasis. Has no activity towards gamma-glutamyl-L-cysteine but possesses very low activity towards gamma-glutamyl-L-alanine. The polypeptide is Gamma-glutamylcyclotransferase 2-3 (Arabidopsis thaliana (Mouse-ear cress)).